The primary structure comprises 239 residues: Putative GEM-like protein 3 (239 aa).

The segment at 29–68 is disordered; that stretch reads HWNPELVSESPAPDEKALSSSSAARSNPYVARAPTETSDA. Residues 128 to 191 form the GRAM domain; that stretch reads KIFRQTFETV…HQLKSVNPSI (64 aa).

It belongs to the GEM family.

This Arabidopsis thaliana (Mouse-ear cress) protein is Putative GEM-like protein 3.